The sequence spans 222 residues: DnaJ homolog subfamily B member 9 (222 aa).

Positions 1 to 23 (MATPQSVFVFAICILMITELILA) are cleaved as a signal peptide. A J domain is found at 26 to 90 (SYYDILGVPK…NSRKEYDTIG (65 aa)). Residues 91-222 (HSAFTNGKGQ…VTTYTDCSGQ (132 aa)) are divergent targeting domain. Serine 133 carries the phosphoserine modification.

As to quaternary structure, interacts with HSPA5/BiP; interaction is direct. Interacts with ERN1/IRE1 (via the luminal region). Interacts with DERL1. Post-translationally, not N-glycosylated.

The protein resides in the endoplasmic reticulum lumen. Its function is as follows. Co-chaperone for Hsp70 protein HSPA5/BiP that acts as a key repressor of the ERN1/IRE1-mediated unfolded protein response (UPR). J domain-containing co-chaperones stimulate the ATPase activity of Hsp70 proteins and are required for efficient substrate recognition by Hsp70 proteins. In the unstressed endoplasmic reticulum, interacts with the luminal region of ERN1/IRE1 and selectively recruits HSPA5/BiP: HSPA5/BiP disrupts the dimerization of the active ERN1/IRE1 luminal region, thereby inactivating ERN1/IRE1. Also involved in endoplasmic reticulum-associated degradation (ERAD) of misfolded proteins. Required for survival of B-cell progenitors and normal antibody production. This Mus musculus (Mouse) protein is DnaJ homolog subfamily B member 9.